A 368-amino-acid chain; its full sequence is High affinity transport system protein p37 (368 aa).

An N-terminal signal peptide occupies residues Met-1–Ser-25. Cys-26 is lipidated: N-palmitoyl cysteine. A lipid anchor (S-diacylglycerol cysteine) is attached at Cys-26.

The protein localises to the cell membrane. In terms of biological role, P37 is part of a high-affinity transport system. The chain is High affinity transport system protein p37 (p37) from Mycoplasma genitalium (strain ATCC 33530 / DSM 19775 / NCTC 10195 / G37) (Mycoplasmoides genitalium).